Here is a 317-residue protein sequence, read N- to C-terminus: Melanocyte-stimulating hormone receptor (317 aa).

Topologically, residues Met1 to Glu37 are extracellular. Residue Asn29 is glycosylated (N-linked (GlcNAc...) asparagine). The helical transmembrane segment at Val38 to Ile63 threads the bilayer. Over Ala64 to Pro72 the chain is Cytoplasmic. A helical membrane pass occupies residues Met73 to Leu93. The Extracellular portion of the chain corresponds to Glu94–Asn118. Residues Thr119–Val140 traverse the membrane as a helical segment. Residues Asp141–Arg163 lie on the Cytoplasmic side of the membrane. The helical transmembrane segment at Ala164–Cys183 threads the bilayer. Over Asp184–Cys191 the chain is Extracellular. Residues Leu192–Leu211 form a helical membrane-spanning segment. Residues Ala212–Ala240 lie on the Cytoplasmic side of the membrane. Residues Ala241–Leu266 traverse the membrane as a helical segment. The Extracellular segment spans residues Cys267–Asn279. A helical transmembrane segment spans residues Phe280–Phe300. Over Arg301 to Trp317 the chain is Cytoplasmic. Cys315 carries the S-palmitoyl cysteine lipid modification.

The protein belongs to the G-protein coupled receptor 1 family. In terms of assembly, interacts with MGRN1, but does not undergo MGRN1-mediated ubiquitination; this interaction competes with GNAS-binding and thus inhibits agonist-induced cAMP production. Interacts with OPN3; the interaction results in a decrease in MC1R-mediated cAMP signaling and ultimately a decrease in melanin production in melanocytes.

Its subcellular location is the cell membrane. Functionally, receptor for MSH (alpha, beta and gamma) and ACTH. The activity of this receptor is mediated by G proteins which activate adenylate cyclase. Mediates melanogenesis, the production of eumelanin (black/brown) and phaeomelanin (red/yellow), via regulation of cAMP signaling in melanocytes. This chain is Melanocyte-stimulating hormone receptor (MC1R), found in Alouatta pigra (Guatemalan howler monkey).